We begin with the raw amino-acid sequence, 505 residues long: Sodium/sialic acid symporter NanT (505 aa).

5 consecutive transmembrane segments (helical) span residues 9–29, 45–65, 80–100, 128–148, and 155–175; these read LNYIALFAYLGAIMAVGVYFA, IPGWAAGFSVFATTLSSITFM, IGQYVAIAILPIVFWFYIPFF, FMLFHIGRIAIVTYLTALALM, and PLMIVFLIGVLCIIYTFLGGI. Na(+) is bound at residue Ala-56. Thr-58 is an N-acetyl-alpha-neuraminate binding site. Leu-59 serves as a coordination point for Na(+). The N-acetyl-alpha-neuraminate site is built by Ser-60, Thr-63, Gln-82, and Arg-135. Asp-182 is a binding site for Na(+). 4 consecutive transmembrane segments (helical) span residues 183–203, 227–247, 280–300, and 318–338; these read VIQGVMLSVAAILIFVVICFN, FSWSWTDSTIPVLMIGFFFAS, LVACVPIFFFAVGSALFAYYT, and FYVISQMPVGVAGLIIAAIFA. Ala-339, Ser-342, Ser-343, Ser-345, and Ser-346 together coordinate Na(+). The next 4 helical transmembrane spans lie at 378 to 398, 406 to 426, 435 to 455, and 457 to 477; these read TLTVVAGLLGVVASTYLIMSN, FNSLLGLMGGPMTGLFMLGIF, ALLGVVASIATVLWVRSATDL, and FFFYGVIGTLMVVIVGYLTAP.

The protein belongs to the sodium:solute symporter (SSF) (TC 2.A.21) family.

The protein resides in the cell inner membrane. The enzyme catalyses N-acetyl-alpha-neuraminate(out) + 2 Na(+)(out) = N-acetyl-alpha-neuraminate(in) + 2 Na(+)(in). Symporter that uses the Na(+) gradient as the driving force for the uptake of the sialic acid N-acetylneuraminic acid (Neu5Ac). Might play a role in persistence after colonization. The sequence is that of Sodium/sialic acid symporter NanT from Aliivibrio fischeri (strain ATCC 700601 / ES114) (Vibrio fischeri).